The sequence spans 163 residues: Large ribosomal subunit protein uL10 (163 aa).

This sequence belongs to the universal ribosomal protein uL10 family. Part of the ribosomal stalk of the 50S ribosomal subunit. The N-terminus interacts with L11 and the large rRNA to form the base of the stalk. The C-terminus forms an elongated spine to which L12 dimers bind in a sequential fashion forming a multimeric L10(L12)X complex.

In terms of biological role, forms part of the ribosomal stalk, playing a central role in the interaction of the ribosome with GTP-bound translation factors. The protein is Large ribosomal subunit protein uL10 of Blochmanniella pennsylvanica (strain BPEN).